The following is a 1165-amino-acid chain: Serine/threonine-protein kinase/endoribonuclease ireA (1165 aa).

The first 27 residues, Met1 to Pro27, serve as a signal peptide directing secretion. Residues Gln28–Asn504 are Lumenal-facing. A glycan (N-linked (GlcNAc...) asparagine) is linked at Asn152. The chain crosses the membrane as a helical span at residues Ala505–Ser525. The Cytoplasmic segment spans residues His526–Glu1165. The interval Gln547–Asp668 is disordered. Basic and acidic residues-rich tracts occupy residues Ala591 to Ser600 and Lys611 to Asp620. Residues Pro637–Lys655 show a composition bias toward basic residues. Over residues Lys656 to Asp668 the composition is skewed to basic and acidic residues. The region spanning Val711–Phe1026 is the Protein kinase domain. ATP contacts are provided by residues Leu717 to Val725 and Lys739. The active-site Proton acceptor is Asp832. Residues Ala899–Gln919 form a disordered region. The 135-residue stretch at Pro1029–Pro1163 folds into the KEN domain.

The protein belongs to the protein kinase superfamily. Ser/Thr protein kinase family. Homodimer; in response to the accumulation of unfolded proteins. Requires Mg(2+) as cofactor. In terms of processing, autophosphorylated mainly on serine residues.

It localises to the membrane. The catalysed reaction is L-seryl-[protein] + ATP = O-phospho-L-seryl-[protein] + ADP + H(+). It catalyses the reaction L-threonyl-[protein] + ATP = O-phospho-L-threonyl-[protein] + ADP + H(+). With respect to regulation, 8-formyl-7-hydroxy-4-methylcoumarin inhibits the endonuclease activity and prebvent the splicing if the hacA mRNA. The kinase domain is activated by trans-autophosphorylation. Kinase activity is required for activation of the endoribonuclease domain. Its function is as follows. Senses unfolded proteins in the lumen of the endoplasmic reticulum (ER) via its N-terminal domain which leads to enzyme auto-activation. The active endoribonuclease domain responds by cleaving an intron from the downstream cytoplasmic mRNA hacA, allowing for the translation of a transcription factor that coordinates a series of adaptive responses that are collectively known as the unfolded protein response (UPR). In the absence of ER stress, ireA controls dual signaling circuits that are both hacA-dependent and hacA-independent and which contribute to the expression of traits that are essential for virulence. The chain is Serine/threonine-protein kinase/endoribonuclease ireA from Aspergillus fumigatus (strain ATCC MYA-4609 / CBS 101355 / FGSC A1100 / Af293) (Neosartorya fumigata).